A 529-amino-acid polypeptide reads, in one-letter code: Plexin domain-containing protein 2 (529 aa).

The first 30 residues, 1–30, serve as a signal peptide directing secretion; that stretch reads MARFPKADLAAAGVMLLCHFFTDQFQFADG. Over 31–454 the chain is Extracellular; the sequence is KPGDQILDWQ…AEKKGGTLHA (424 aa). The tract at residues 80–104 is disordered; the sequence is ASVGQDSPEPRSFTDLLLDDGQDNN. Asparagine 103 and asparagine 160 each carry an N-linked (GlcNAc...) asparagine glycan. The PSI domain maps to 327-372; that stretch reads TCLQFNRCGPCVSSQIGFNCSWCSKLQRCSSGFDRHRQDWVDSGCP. A helical membrane pass occupies residues 455–475; it reads GLIIGILILVLIVATAILVTV. Residues 476 to 529 lie on the Cytoplasmic side of the membrane; it reads YMYHHPTSAASIFFIERRPSRWPAMKFRRGSGHPAYAEVEPVGEKEGFIVSEQC. Serine 506 is modified (phosphoserine).

The protein belongs to the plexin family. As to quaternary structure, interacts with CTTN. In terms of tissue distribution, expressed in the endothelial cells of the stroma but not in the endothelial cells of normal colonic tissue.

Its subcellular location is the membrane. In terms of biological role, may play a role in tumor angiogenesis. The chain is Plexin domain-containing protein 2 (PLXDC2) from Homo sapiens (Human).